A 396-amino-acid chain; its full sequence is Inositol hexakisphosphate kinase 3 (396 aa).

A substrate-binding site is contributed by 206-214 (PCILDLKMG).

The protein belongs to the inositol phosphokinase (IPK) family. As to expression, highly expressed in cerebellum, brain cortex, kidney, thymus and lung. Detected at lower levels in hippocampus, testis, heart and olfactory bulb.

The protein localises to the cytoplasm. The catalysed reaction is 1D-myo-inositol hexakisphosphate + ATP = 5-diphospho-1D-myo-inositol 1,2,3,4,6-pentakisphosphate + ADP. It catalyses the reaction 1-diphospho-1D-myo-inositol 2,3,4,5,6-pentakisphosphate + ATP + H(+) = 1,5-bis(diphospho)-1D-myo-inositol 2,3,4,6-tetrakisphosphate + ADP. In terms of biological role, converts inositol hexakisphosphate (InsP6) to diphosphoinositol pentakisphosphate (InsP7/PP-InsP5). Converts 1,3,4,5,6-pentakisphosphate (InsP5) to PP-InsP4. The sequence is that of Inositol hexakisphosphate kinase 3 (Ip6k3) from Mus musculus (Mouse).